A 1103-amino-acid polypeptide reads, in one-letter code: Bifunctional cytochrome P450/NADPH--P450 reductase (1103 aa).

The cytochrome P450 stretch occupies residues 1 to 491; that stretch reads MSTPKAEPVP…SSSEHADHAA (491 aa). Cys-415 contributes to the heme binding site. The NADPH--P450 reductase stretch occupies residues 492–1103; the sequence is GHGKAGAAKK…KERYTTDIFA (612 aa). Residues 508-649 form the Flavodoxin-like domain; that stretch reads MHVYYGSNTG…DFDTWGETSF (142 aa). FMN is bound by residues 514-519, 561-564, Cys-596, and Thr-604; these read SNTGTC and SYEG. The region spanning 685-924 is the FAD-binding FR-type domain; it reads LQLQEGLVVE…RPSHTGFKPP (240 aa).

This sequence in the N-terminal section; belongs to the cytochrome P450 family. Heme serves as cofactor. FAD is required as a cofactor. It depends on FMN as a cofactor.

The enzyme catalyses 2 oxidized [cytochrome P450] + NADPH = 2 reduced [cytochrome P450] + NADP(+) + H(+). It carries out the reaction an organic molecule + reduced [NADPH--hemoprotein reductase] + O2 = an alcohol + oxidized [NADPH--hemoprotein reductase] + H2O + H(+). Functions as a fatty acid monooxygenase. Also displays a NADPH-dependent reductase activity in the C-terminal domain, which allows electron transfer from NADPH to the heme iron of the cytochrome P450 N-terminal domain. This chain is Bifunctional cytochrome P450/NADPH--P450 reductase, found in Aspergillus oryzae (strain ATCC 42149 / RIB 40) (Yellow koji mold).